Consider the following 592-residue polypeptide: Beta-fructofuranosidase, insoluble isoenzyme 1 (592 aa).

An N-terminal signal peptide occupies residues 1-39 (MGVTIRNRNYDHGSLPFLQSLLAILLVTTTTLHINGVEA). A propeptide spanning residues 40–48 (FHEIHYNLQ) is cleaved from the precursor. Asp74 is an active-site residue. The N-linked (GlcNAc...) (complex) asparagine glycan is linked to Asn170. An N-linked (GlcNAc...) asparagine glycan is attached at Asn195. A glycan (N-linked (GlcNAc...) (complex) asparagine) is linked at Asn311. Asn348 carries an N-linked (GlcNAc...) (high mannose) asparagine glycan. Residue Asn570 is glycosylated (N-linked (GlcNAc...) asparagine).

Belongs to the glycosyl hydrolase 32 family. As to expression, in leaves and roots of young plants.

It localises to the secreted. Its subcellular location is the cell wall. It catalyses the reaction Hydrolysis of terminal non-reducing beta-D-fructofuranoside residues in beta-D-fructofuranosides.. Functionally, may play an important role in phloem unloading and in stress response. This Daucus carota (Wild carrot) protein is Beta-fructofuranosidase, insoluble isoenzyme 1 (INV1).